A 353-amino-acid chain; its full sequence is 4-hydroxy-3-methylbut-2-en-1-yl diphosphate synthase (flavodoxin) (353 aa).

The [4Fe-4S] cluster site is built by Cys-265, Cys-268, Cys-300, and Glu-307.

It belongs to the IspG family. It depends on [4Fe-4S] cluster as a cofactor.

The catalysed reaction is (2E)-4-hydroxy-3-methylbut-2-enyl diphosphate + oxidized [flavodoxin] + H2O + 2 H(+) = 2-C-methyl-D-erythritol 2,4-cyclic diphosphate + reduced [flavodoxin]. It participates in isoprenoid biosynthesis; isopentenyl diphosphate biosynthesis via DXP pathway; isopentenyl diphosphate from 1-deoxy-D-xylulose 5-phosphate: step 5/6. Functionally, converts 2C-methyl-D-erythritol 2,4-cyclodiphosphate (ME-2,4cPP) into 1-hydroxy-2-methyl-2-(E)-butenyl 4-diphosphate. This Sulfurihydrogenibium sp. (strain YO3AOP1) protein is 4-hydroxy-3-methylbut-2-en-1-yl diphosphate synthase (flavodoxin).